A 577-amino-acid chain; its full sequence is Adenine deaminase (577 aa).

This sequence belongs to the metallo-dependent hydrolases superfamily. Adenine deaminase family. Mn(2+) is required as a cofactor.

It catalyses the reaction adenine + H2O + H(+) = hypoxanthine + NH4(+). In Geobacillus kaustophilus (strain HTA426), this protein is Adenine deaminase.